We begin with the raw amino-acid sequence, 100 residues long: NADH-quinone oxidoreductase subunit K (100 aa).

3 helical membrane-spanning segments follow: residues 4 to 24 (LQHGLILAAILFVLGLTGLLI), 28 to 48 (LLFMLISLEIMINAAALAFVV), and 60 to 80 (VMYILAITLAAAEASIGLALL).

The protein belongs to the complex I subunit 4L family. In terms of assembly, NDH-1 is composed of 13 different subunits. Subunits NuoA, H, J, K, L, M, N constitute the membrane sector of the complex.

It is found in the cell inner membrane. It carries out the reaction a quinone + NADH + 5 H(+)(in) = a quinol + NAD(+) + 4 H(+)(out). Functionally, NDH-1 shuttles electrons from NADH, via FMN and iron-sulfur (Fe-S) centers, to quinones in the respiratory chain. The immediate electron acceptor for the enzyme in this species is believed to be ubiquinone. Couples the redox reaction to proton translocation (for every two electrons transferred, four hydrogen ions are translocated across the cytoplasmic membrane), and thus conserves the redox energy in a proton gradient. The protein is NADH-quinone oxidoreductase subunit K of Pectobacterium carotovorum subsp. carotovorum (strain PC1).